Reading from the N-terminus, the 209-residue chain is Tektin bundle-interacting protein 1 (209 aa).

As to quaternary structure, microtubule inner protein component of sperm flagellar doublet microtubules.

It localises to the cytoplasm. It is found in the cytoskeleton. Its subcellular location is the cilium axoneme. The protein localises to the flagellum axoneme. Its function is as follows. Microtubule inner protein (MIP) part of the dynein-decorated doublet microtubules (DMTs) in cilia axoneme, which is required for motile cilia beating. Located at the center of the tektin bundle where may function to recruit tektins or stabilize the bundle. The chain is Tektin bundle-interacting protein 1 from Homo sapiens (Human).